The sequence spans 292 residues: MRIIKYLTILVISVVILTSCQSSSSQESTKSGEFRIVPTTVALTMTLDKLDLPIVGKPTSYKTLPNRYKDVPEIGQPMEPNVEAVKKLKPTHVLSVSTIKDEMQPFYKQLNMKGYFYDFDSLKGMQKSITQLGDQFNRKAQAKELNDHLNSVKQKIENKAAKQKKHPKVLILMGVPGSYLVATDKSYIGDLVKIAGGENVIKVKDRQYISSNTENLLNINPDIILRLPHGMSEEVKKMFQKEFKQNDIWKHFKAVKNNHVYDLEEVPFGITANVDADKAMTQLYDLFYKDKK.

The N-terminal stretch at 1-19 is a signal peptide; that stretch reads MRIIKYLTILVISVVILTS. The N-palmitoyl cysteine moiety is linked to residue Cys20. The S-diacylglycerol cysteine moiety is linked to residue Cys20. Residues 35–291 enclose the Fe/B12 periplasmic-binding domain; sequence RIVPTTVALT…QLYDLFYKDK (257 aa). Heme is bound by residues Val41, Ala42, Ser60, Tyr61, Met78, and His229.

Belongs to the bacterial solute-binding protein 8 family. Requires heme b as cofactor.

The protein resides in the cell membrane. Involved in heme (porphyrin) scavenging. Binds Fe(2+) and Fe(3+) heme but the largest fraction is Fe(2+) heme. Functions as a high-affinity heme binding protein and probably has a role in relaying heme-iron from cell wall-anchored isd proteins receptors to the probable permease IsdF. The protein is High-affinity heme uptake system protein IsdE (isdE) of Staphylococcus aureus (strain MRSA252).